We begin with the raw amino-acid sequence, 749 residues long: DNA topoisomerase 1 (749 aa).

Positions Met-1 to Asp-110 are disordered. Basic and acidic residues predominate over residues Leu-62–Leu-75. The segment covering Pro-79–Ser-94 has biased composition (low complexity). A compositionally biased stretch (basic and acidic residues) spans Pro-101–Asp-110. Interaction with DNA regions lie at residues Lys-338 to Tyr-339, Arg-401 to Lys-406, and Thr-493 to Lys-495. Positions Asn-345–Phe-749 constitute a Topo IB-type catalytic domain. The active-site O-(3'-phospho-DNA)-tyrosine intermediate is the Tyr-707.

This sequence belongs to the type IB topoisomerase family.

The protein localises to the nucleus. It localises to the nucleolus. The protein resides in the nucleoplasm. The enzyme catalyses ATP-independent breakage of single-stranded DNA, followed by passage and rejoining.. Its function is as follows. Releases the supercoiling and torsional tension of DNA introduced during the DNA replication and transcription by transiently cleaving and rejoining one strand of the DNA duplex. Introduces a single-strand break via transesterification at the specific target site 5'-[CT]CCTTp site in duplex DNA. The scissile phosphodiester is attacked by the catalytic tyrosine of the enzyme, resulting in the formation of a DNA-(3'-phosphotyrosyl)-enzyme intermediate and the expulsion of a 5'-OH DNA strand. The free DNA strand then undergoes passage around the unbroken strand thus removing DNA supercoils. Finally, in the religation step, the DNA 5'-OH attacks the covalent intermediate to expel the active-site tyrosine and restore the DNA phosphodiester backbone. This chain is DNA topoisomerase 1 (TOP1), found in Candidozyma auris (Yeast).